The chain runs to 450 residues: UDP-N-acetylmuramoylalanine--D-glutamate ligase (450 aa).

119–125 is a binding site for ATP; the sequence is GSNGKTT.

Belongs to the MurCDEF family.

The protein resides in the cytoplasm. It catalyses the reaction UDP-N-acetyl-alpha-D-muramoyl-L-alanine + D-glutamate + ATP = UDP-N-acetyl-alpha-D-muramoyl-L-alanyl-D-glutamate + ADP + phosphate + H(+). It participates in cell wall biogenesis; peptidoglycan biosynthesis. Its function is as follows. Cell wall formation. Catalyzes the addition of glutamate to the nucleotide precursor UDP-N-acetylmuramoyl-L-alanine (UMA). The protein is UDP-N-acetylmuramoylalanine--D-glutamate ligase of Bacillus cereus (strain ATCC 14579 / DSM 31 / CCUG 7414 / JCM 2152 / NBRC 15305 / NCIMB 9373 / NCTC 2599 / NRRL B-3711).